The following is a 524-amino-acid chain: Bifunctional purine biosynthesis protein PurH (524 aa).

An MGS-like domain is found at 1–144; it reads MTRRALVSVS…KNSAHVGVVV (144 aa).

Belongs to the PurH family.

It carries out the reaction (6R)-10-formyltetrahydrofolate + 5-amino-1-(5-phospho-beta-D-ribosyl)imidazole-4-carboxamide = 5-formamido-1-(5-phospho-D-ribosyl)imidazole-4-carboxamide + (6S)-5,6,7,8-tetrahydrofolate. The catalysed reaction is IMP + H2O = 5-formamido-1-(5-phospho-D-ribosyl)imidazole-4-carboxamide. It functions in the pathway purine metabolism; IMP biosynthesis via de novo pathway; 5-formamido-1-(5-phospho-D-ribosyl)imidazole-4-carboxamide from 5-amino-1-(5-phospho-D-ribosyl)imidazole-4-carboxamide (10-formyl THF route): step 1/1. It participates in purine metabolism; IMP biosynthesis via de novo pathway; IMP from 5-formamido-1-(5-phospho-D-ribosyl)imidazole-4-carboxamide: step 1/1. The sequence is that of Bifunctional purine biosynthesis protein PurH from Anaeromyxobacter dehalogenans (strain 2CP-1 / ATCC BAA-258).